Here is a 101-residue protein sequence, read N- to C-terminus: NAD(P)H-quinone oxidoreductase subunit 4L, chloroplastic (101 aa).

A run of 3 helical transmembrane segments spans residues 2-22 (MLEH…YGLI), 32-52 (MCLE…SDFF), and 61-81 (IFSI…PAIV).

It belongs to the complex I subunit 4L family. NDH is composed of at least 16 different subunits, 5 of which are encoded in the nucleus.

It is found in the plastid. The protein resides in the chloroplast thylakoid membrane. The enzyme catalyses a plastoquinone + NADH + (n+1) H(+)(in) = a plastoquinol + NAD(+) + n H(+)(out). It carries out the reaction a plastoquinone + NADPH + (n+1) H(+)(in) = a plastoquinol + NADP(+) + n H(+)(out). NDH shuttles electrons from NAD(P)H:plastoquinone, via FMN and iron-sulfur (Fe-S) centers, to quinones in the photosynthetic chain and possibly in a chloroplast respiratory chain. The immediate electron acceptor for the enzyme in this species is believed to be plastoquinone. Couples the redox reaction to proton translocation, and thus conserves the redox energy in a proton gradient. This Morus indica (Mulberry) protein is NAD(P)H-quinone oxidoreductase subunit 4L, chloroplastic.